Consider the following 355-residue polypeptide: Protein RecA (355 aa).

65 to 72 provides a ligand contact to ATP; the sequence is GPESSGKT. Residues 333–355 form a disordered region; sequence IEEKDEKQAEAEKNENTNLFDEE. Residues 336-347 are compositionally biased toward basic and acidic residues; that stretch reads KDEKQAEAEKNE.

The protein belongs to the RecA family.

It is found in the cytoplasm. In terms of biological role, can catalyze the hydrolysis of ATP in the presence of single-stranded DNA, the ATP-dependent uptake of single-stranded DNA by duplex DNA, and the ATP-dependent hybridization of homologous single-stranded DNAs. It interacts with LexA causing its activation and leading to its autocatalytic cleavage. In Staphylococcus carnosus (strain TM300), this protein is Protein RecA.